The sequence spans 347 residues: MRIEEDLKLGFKDVLIRPKRSTLKSRSDVELERQFTFKHSGQTWSGVPIIAANMDTVGTFAMATALASFDILTAVHKHYSVEEWNAFAASASADVLKHVMVSTGTSDTDFEKTKQILIANPALNFLCIDVANGYSEHFVQFVSKAREAWPDKTIIAGNVVTGEMCEELILAGADIVKVGIGPGSVCTTRVKTGVGYPQLSAVIECADAAHGLGGQIISDGGCTMPGDVAKAFGGGADFVMLGGMLAGHEESGGTVVEENGEKFMLFYGMSSESAMNRHVGGVAQYRAAEGKTVKLPLRGPVENTARDVMGGLRSACTYVGASRLKELTKRTTFIRVQEQENRIFNSL.

108-131 (TDFEKTKQILIANPALNFLCIDVA) contacts NADP(+). G181 and G183 together coordinate K(+). Catalysis depends on C186, which acts as the Thioimidate intermediate. 216-239 (IISDGGCTMPGDVAKAFGGGADFV) contributes to the NADP(+) binding site.

The protein belongs to the IMPDH/GMPR family. GuaC type 1 subfamily. Homotetramer.

The catalysed reaction is IMP + NH4(+) + NADP(+) = GMP + NADPH + 2 H(+). In terms of biological role, catalyzes the irreversible NADPH-dependent deamination of GMP to IMP. It functions in the conversion of nucleobase, nucleoside and nucleotide derivatives of G to A nucleotides, and in maintaining the intracellular balance of A and G nucleotides. The sequence is that of GMP reductase from Enterobacter sp. (strain 638).